The chain runs to 74 residues: Apolipoprotein C-I, acidic form (74 aa).

The N-terminal stretch at methionine 1–glycine 26 is a signal peptide.

Belongs to the apolipoprotein C1 family.

The protein resides in the secreted. This is Apolipoprotein C-I, acidic form (APOC1A) from Colobus guereza (Mantled guereza).